The chain runs to 784 residues: LPS-assembly protein LptD (784 aa).

The N-terminal stretch at 1 to 24 is a signal peptide; sequence MKKRIPTLLATMIASALYSHQGLA. Cystine bridges form between C31/C724 and C173/C725.

Belongs to the LptD family. As to quaternary structure, component of the lipopolysaccharide transport and assembly complex. Interacts with LptE and LptA. In terms of processing, contains two intramolecular disulfide bonds.

The protein localises to the cell outer membrane. In terms of biological role, together with LptE, is involved in the assembly of lipopolysaccharide (LPS) at the surface of the outer membrane. This Salmonella typhi protein is LPS-assembly protein LptD.